Consider the following 81-residue polypeptide: Exodeoxyribonuclease 7 small subunit (81 aa).

It belongs to the XseB family. Heterooligomer composed of large and small subunits.

Its subcellular location is the cytoplasm. The enzyme catalyses Exonucleolytic cleavage in either 5'- to 3'- or 3'- to 5'-direction to yield nucleoside 5'-phosphates.. Functionally, bidirectionally degrades single-stranded DNA into large acid-insoluble oligonucleotides, which are then degraded further into small acid-soluble oligonucleotides. The sequence is that of Exodeoxyribonuclease 7 small subunit from Nitratidesulfovibrio vulgaris (strain ATCC 29579 / DSM 644 / CCUG 34227 / NCIMB 8303 / VKM B-1760 / Hildenborough) (Desulfovibrio vulgaris).